We begin with the raw amino-acid sequence, 613 residues long: Ribosome-associated molecular chaperone SSB1 (613 aa).

Alanine 2 is subject to N-acetylalanine. Residues 2–391 form a nucleotide binding domain (NBD) region; that stretch reads AEGVFQGAIG…ILTGQSTSDE (390 aa). 16 to 18 lines the ATP pocket; sequence TTY. Threonine 47 carries the post-translational modification Phosphothreonine. ATP contacts are provided by residues lysine 73, 205–207, 271–278, and glycine 342; these read GGT and ERAKRTLS. Positions 392 to 402 are inter-domain linker; the sequence is TKDLLLLDVAP. The interval 403-613 is substrate binding domain (SBD); sequence LSLGVGMQGD…RVVTKAMSSR (211 aa). The Contributes to ribosome binding motif lies at 428–430; the sequence is KRR. Threonine 431 is modified (phosphothreonine). The tract at residues 516–612 is lid domain (SBDalpha); the sequence is SEEIEKMVNQ…KRVVTKAMSS (97 aa). Residues 574–582 carry the Nuclear export signal motif; sequence IEAALSDAL. A required for interaction with ribosomes region spans residues 601-613; it reads GLKRVVTKAMSSR.

The protein belongs to the heat shock protein 70 family. Ssb-type Hsp70 subfamily. As to quaternary structure, binds to ribosomes. Binds close to the ribosomal tunnel exit via contacts with both ribosomal proteins RPL35, RPL39 and RPL19, and rRNA. Directly interacts with nascent polypeptides. This interaction is dependent on the ribosome-associated complex (RAC). Interacts with SSE1. Interacts with FES1. Interacts with NAP1.

The protein localises to the cytoplasm. It carries out the reaction ATP + H2O = ADP + phosphate + H(+). Its function is as follows. Ribosome-bound, Hsp70-type chaperone that assists in the cotranslational folding of newly synthesized proteins in the cytosol. Stimulates folding by interacting with nascent chains, binding to short, largely hydrophobic sequences exposed by unfolded proteins, thereby stabilizing longer, more slowly translated, and aggregation-prone nascent polypeptides and domains that cannot fold stably until fully synthesized. The Hsp70-protein substrate interaction depends on ATP-binding and on allosteric regulation between the NBD and the SBD. The ATP-bound state is characterized by a fast exchange rate of substrate (low affinity state), while in the ADP-bound state exchange is much slower (high affinity state). During the Hsp70 cycle, the chaperone switches between the ATP-bound state (open conformation) and the ADP-bound state (closed conformation) by major conformational rearrangements involving mainly the lid domain. Ssb cooperates with a specific Hsp40/Hsp70 co-chaperone termed the ribosome-associated complex (RAC), which stimulates the ATPase activity of the ribosome-associated pool of Ssbs and switches it to the high affinity substrate binding state. Hsp110 chaperone SSE1 and FES1 act as nucleotide exchange factors that cause substrate release. The sequence is that of Ribosome-associated molecular chaperone SSB1 from Saccharomyces cerevisiae (strain ATCC 204508 / S288c) (Baker's yeast).